Reading from the N-terminus, the 181-residue chain is Large ribosomal subunit protein uL5 (181 aa).

Belongs to the universal ribosomal protein uL5 family. As to quaternary structure, part of the 50S ribosomal subunit; part of the 5S rRNA/L5/L18/L25 subcomplex. Contacts the 5S rRNA and the P site tRNA. Forms a bridge to the 30S subunit in the 70S ribosome.

This is one of the proteins that bind and probably mediate the attachment of the 5S RNA into the large ribosomal subunit, where it forms part of the central protuberance. In the 70S ribosome it contacts protein S13 of the 30S subunit (bridge B1b), connecting the 2 subunits; this bridge is implicated in subunit movement. Contacts the P site tRNA; the 5S rRNA and some of its associated proteins might help stabilize positioning of ribosome-bound tRNAs. The polypeptide is Large ribosomal subunit protein uL5 (Helicobacter hepaticus (strain ATCC 51449 / 3B1)).